The sequence spans 438 residues: Probable tRNA pseudouridine synthase D (438 aa).

D86 (nucleophile) is an active-site residue. A TRUD domain is found at 165-390 (GVPNFFGIQR…SKGTRRELLL (226 aa)).

The protein belongs to the pseudouridine synthase TruD family.

The catalysed reaction is uridine(13) in tRNA = pseudouridine(13) in tRNA. Functionally, could be responsible for synthesis of pseudouridine from uracil-13 in transfer RNAs. This Methanosarcina barkeri (strain Fusaro / DSM 804) protein is Probable tRNA pseudouridine synthase D.